An 832-amino-acid polypeptide reads, in one-letter code: G-type lectin S-receptor-like serine/threonine-protein kinase RLK1 (832 aa).

Residues 1–24 form the signal peptide; it reads MGSLSCSIIHLVLILQLQTFFVFS. The Extracellular portion of the chain corresponds to 25-461; sequence QNIRNGSVPV…VPVTGNRAKK (437 aa). 6 N-linked (GlcNAc...) asparagine glycosylation sites follow: N29, N92, N100, N178, N240, and N251. Residues 37 to 157 form the Bulb-type lectin domain; the sequence is SLTASESQQI…GSEDSDEVLW (121 aa). The region spanning 299–349 is the EGF-like; atypical domain; sequence RDNMCSPDDALGNMACGYNNICSLGNNKRPKCECPERFVLKDPSNEYGDCL. 3 cysteine pairs are disulfide-bonded: C303-C320, C314-C330, and C332-C348. Residues 357 to 446 form the PAN domain; sequence CRPENQTANS…DSDTFIKVRN (90 aa). N361 carries N-linked (GlcNAc...) asparagine glycosylation. 2 disulfides stabilise this stretch: C397–C420 and C401–C407. N446 carries N-linked (GlcNAc...) asparagine glycosylation. Residues 462-482 traverse the membrane as a helical segment; it reads LDWLIIACSVLLGTSAFVIFD. At 483–832 the chain is on the cytoplasmic side; it reads TSCSYRKTKK…SLSSDPVSLV (350 aa). The Protein kinase domain maps to 531 to 803; sequence RDFTEELGRG…NVTQMLEGVI (273 aa). ATP is bound by residues 537–545 and K563; that span reads LGRGAFGIV. Positions 622-638 are caM-binding; that stretch reads RRPRPSWEDRKNIAVAI. D657 acts as the Proton acceptor in catalysis.

This sequence belongs to the protein kinase superfamily. Ser/Thr protein kinase family.

The protein localises to the cell membrane. It catalyses the reaction L-seryl-[protein] + ATP = O-phospho-L-seryl-[protein] + ADP + H(+). It carries out the reaction L-threonyl-[protein] + ATP = O-phospho-L-threonyl-[protein] + ADP + H(+). This chain is G-type lectin S-receptor-like serine/threonine-protein kinase RLK1 (RLK1), found in Arabidopsis thaliana (Mouse-ear cress).